We begin with the raw amino-acid sequence, 464 residues long: 3-deoxy-D-manno-octulosonic acid transferase (464 aa).

Residues 2–22 form a helical; Signal-anchor membrane-spanning segment; that stretch reads MLLYYALSFILLPIYFIIILI. Positions 47–93 constitute an RPE1 insert domain; that stretch reads YSLDFLHNEANKERFKGDTERRTAAYTSVREDSSTGSTSKLPLEASY. Glutamate 107 functions as the Proton acceptor in the catalytic mechanism. Residues 311 to 312, 352 to 354, and 377 to 380 contribute to the CMP site; these read PR, FGE, and NILE.

This sequence belongs to the glycosyltransferase group 1 family.

Its subcellular location is the cell inner membrane. The enzyme catalyses lipid IVA (E. coli) + CMP-3-deoxy-beta-D-manno-octulosonate = alpha-Kdo-(2-&gt;6)-lipid IVA (E. coli) + CMP + H(+). It participates in bacterial outer membrane biogenesis; LPS core biosynthesis. In terms of biological role, involved in lipopolysaccharide (LPS) biosynthesis. Catalyzes the transfer of 3-deoxy-D-manno-octulosonate (Kdo) residue(s) from CMP-Kdo to lipid IV(A), the tetraacyldisaccharide-1,4'-bisphosphate precursor of lipid A. In Rickettsia felis (strain ATCC VR-1525 / URRWXCal2) (Rickettsia azadi), this protein is 3-deoxy-D-manno-octulosonic acid transferase (waaA).